A 132-amino-acid chain; its full sequence is Small ribosomal subunit protein uS8 (132 aa).

It belongs to the universal ribosomal protein uS8 family. Part of the 30S ribosomal subunit. Contacts proteins S5 and S12.

Functionally, one of the primary rRNA binding proteins, it binds directly to 16S rRNA central domain where it helps coordinate assembly of the platform of the 30S subunit. This Kocuria rhizophila (strain ATCC 9341 / DSM 348 / NBRC 103217 / DC2201) protein is Small ribosomal subunit protein uS8.